A 182-amino-acid chain; its full sequence is uncharacterized protein (182 aa).

Residues 66-133 (QKRKRREIKV…NLEIETNSDS (68 aa)) adopt a coiled-coil conformation.

This is an uncharacterized protein from Acanthamoeba polyphaga (Amoeba).